The chain runs to 717 residues: Fatty acid oxidation complex subunit alpha (717 aa).

The tract at residues 1 to 190 (MIHAGNAITV…KDGAVDAVVA (190 aa)) is enoyl-CoA hydratase/isomerase. A substrate-binding site is contributed by Asp298. A 3-hydroxyacyl-CoA dehydrogenase region spans residues 313 to 717 (HPVNQAAVLG…MAANNKKFYG (405 aa)). NAD(+)-binding positions include Met326, Asp345, 402–404 (VTE), Lys409, and Ser431. The For 3-hydroxyacyl-CoA dehydrogenase activity role is filled by His452. Asn455 serves as a coordination point for NAD(+). Asn502 serves as a coordination point for substrate.

It in the N-terminal section; belongs to the enoyl-CoA hydratase/isomerase family. In the C-terminal section; belongs to the 3-hydroxyacyl-CoA dehydrogenase family. In terms of assembly, heterotetramer of two alpha chains (FadB) and two beta chains (FadA).

The enzyme catalyses a (3S)-3-hydroxyacyl-CoA + NAD(+) = a 3-oxoacyl-CoA + NADH + H(+). It carries out the reaction a (3S)-3-hydroxyacyl-CoA = a (2E)-enoyl-CoA + H2O. The catalysed reaction is a 4-saturated-(3S)-3-hydroxyacyl-CoA = a (3E)-enoyl-CoA + H2O. It catalyses the reaction (3S)-3-hydroxybutanoyl-CoA = (3R)-3-hydroxybutanoyl-CoA. The enzyme catalyses a (3Z)-enoyl-CoA = a 4-saturated (2E)-enoyl-CoA. It carries out the reaction a (3E)-enoyl-CoA = a 4-saturated (2E)-enoyl-CoA. It functions in the pathway lipid metabolism; fatty acid beta-oxidation. Involved in the aerobic and anaerobic degradation of long-chain fatty acids via beta-oxidation cycle. Catalyzes the formation of 3-oxoacyl-CoA from enoyl-CoA via L-3-hydroxyacyl-CoA. It can also use D-3-hydroxyacyl-CoA and cis-3-enoyl-CoA as substrate. This is Fatty acid oxidation complex subunit alpha from Acinetobacter baumannii (strain AB307-0294).